Here is a 296-residue protein sequence, read N- to C-terminus: Diaminopimelate epimerase (296 aa).

Substrate contacts are provided by N17, Q49, and N69. The Proton donor role is filled by C78. Substrate-binding positions include 79 to 80, N171, N205, and 223 to 224; these read GN and ER. Catalysis depends on C232, which acts as the Proton acceptor. Substrate is bound at residue 233–234; that stretch reads GT.

The protein belongs to the diaminopimelate epimerase family. As to quaternary structure, homodimer.

It is found in the cytoplasm. It carries out the reaction (2S,6S)-2,6-diaminopimelate = meso-2,6-diaminopimelate. It functions in the pathway amino-acid biosynthesis; L-lysine biosynthesis via DAP pathway; DL-2,6-diaminopimelate from LL-2,6-diaminopimelate: step 1/1. Its function is as follows. Catalyzes the stereoinversion of LL-2,6-diaminopimelate (L,L-DAP) to meso-diaminopimelate (meso-DAP), a precursor of L-lysine and an essential component of the bacterial peptidoglycan. In Methylorubrum extorquens (strain PA1) (Methylobacterium extorquens), this protein is Diaminopimelate epimerase.